The sequence spans 557 residues: Glutathione hydrolase proenzyme (557 aa).

The first 24 residues, 1–24 (MQPVLFRTLSLGVAIAAASSSAFA), serve as a signal peptide directing secretion. Residue Arg94 participates in L-glutamate binding. The active-site Nucleophile is Thr364. L-glutamate contacts are provided by residues Thr382, Asn384, Glu403, Asp406, 435-436 (SS), and 456-457 (GG).

This sequence belongs to the gamma-glutamyltransferase family. In terms of assembly, this enzyme consists of two polypeptide chains, which are synthesized in precursor form from a single polypeptide. Cleaved by autocatalysis into a large and a small subunit.

The protein localises to the periplasm. The catalysed reaction is an N-terminal (5-L-glutamyl)-[peptide] + an alpha-amino acid = 5-L-glutamyl amino acid + an N-terminal L-alpha-aminoacyl-[peptide]. The enzyme catalyses glutathione + H2O = L-cysteinylglycine + L-glutamate. It carries out the reaction an S-substituted glutathione + H2O = an S-substituted L-cysteinylglycine + L-glutamate. The protein operates within sulfur metabolism; glutathione metabolism. This Pseudomonas aeruginosa (strain ATCC 15692 / DSM 22644 / CIP 104116 / JCM 14847 / LMG 12228 / 1C / PRS 101 / PAO1) protein is Glutathione hydrolase proenzyme (ggt).